We begin with the raw amino-acid sequence, 613 residues long: Dihydroxy-acid dehydratase (613 aa).

Aspartate 81 is a binding site for Mg(2+). Residue cysteine 122 participates in [2Fe-2S] cluster binding. Aspartate 123 and lysine 124 together coordinate Mg(2+). The residue at position 124 (lysine 124) is an N6-carboxylysine. Cysteine 195 is a [2Fe-2S] cluster binding site. Glutamate 491 contacts Mg(2+). Serine 517 serves as the catalytic Proton acceptor.

It belongs to the IlvD/Edd family. Homodimer. [2Fe-2S] cluster serves as cofactor. Mg(2+) is required as a cofactor.

The enzyme catalyses (2R)-2,3-dihydroxy-3-methylbutanoate = 3-methyl-2-oxobutanoate + H2O. It carries out the reaction (2R,3R)-2,3-dihydroxy-3-methylpentanoate = (S)-3-methyl-2-oxopentanoate + H2O. Its pathway is amino-acid biosynthesis; L-isoleucine biosynthesis; L-isoleucine from 2-oxobutanoate: step 3/4. It participates in amino-acid biosynthesis; L-valine biosynthesis; L-valine from pyruvate: step 3/4. Functions in the biosynthesis of branched-chain amino acids. Catalyzes the dehydration of (2R,3R)-2,3-dihydroxy-3-methylpentanoate (2,3-dihydroxy-3-methylvalerate) into 2-oxo-3-methylpentanoate (2-oxo-3-methylvalerate) and of (2R)-2,3-dihydroxy-3-methylbutanoate (2,3-dihydroxyisovalerate) into 2-oxo-3-methylbutanoate (2-oxoisovalerate), the penultimate precursor to L-isoleucine and L-valine, respectively. This is Dihydroxy-acid dehydratase from Vibrio parahaemolyticus serotype O3:K6 (strain RIMD 2210633).